The primary structure comprises 393 residues: Envelope glycoprotein M (393 aa).

Topologically, residues 1 to 14 are intravirion; that stretch reads MCGPRNAEAVSWRS. The chain crosses the membrane as a helical span at residues 15–35; the sequence is WLIEVCGFALAALTLVLTLIF. Residues 36–83 are Virion surface-facing; it reads ASLPEMGFPCFYATVADYDTLNDTSGGVWTRQPLVAPALFLETPTVTS. Residues 84-104 traverse the membrane as a helical segment; it reads FFGFTATVLLAHALYAVAGAV. Residues 105-130 lie on the Intravirion side of the membrane; sequence VLRREAGRLAFQPSVVLYAASTVAAP. Residues 131 to 151 form a helical membrane-spanning segment; sequence GTLMLGALCAWTLQAVVLLMA. Topologically, residues 152–154 are virion surface; sequence HKQ. Residues 155–175 traverse the membrane as a helical segment; it reads AGLAAAAYITHFVFLALFGAC. The Intravirion portion of the chain corresponds to 176–207; the sequence is HACKGTGDVRAALAASPPLRRVAVHARAVVTN. The helical transmembrane segment at 208 to 228 threads the bilayer; the sequence is VVLGAVGLGAAVVGLMLGVLL. The Virion surface portion of the chain corresponds to 229 to 241; the sequence is ANSFHISLWKTAE. A helical transmembrane segment spans residues 242 to 262; that stretch reads AALAVFTLLALALMVFVEVVV. Residues 263 to 264 are Intravirion-facing; that stretch reads SG. The chain crosses the membrane as a helical span at residues 265-285; that stretch reads YVQVLPTPAFCVLVASAAFGV. The Virion surface portion of the chain corresponds to 286–303; sequence SAHRYFAKFSEALGETHG. Residues 304-324 form a helical membrane-spanning segment; that stretch reads VVIGTRAVLAVLSLIALAMIV. The Intravirion portion of the chain corresponds to 325 to 393; it reads VRLVRACIAH…EVVYENLGFE (69 aa).

Belongs to the herpesviridae glycoprotein M family. As to quaternary structure, interacts (via N-terminus) with gN (via N-terminus). The gM-gN heterodimer forms the gCII complex.

The protein resides in the virion membrane. It is found in the host Golgi apparatus. It localises to the host trans-Golgi network. The protein localises to the host endosome membrane. Its subcellular location is the host nucleus inner membrane. Functionally, envelope glycoprotein important for virion assembly and egress. Plays a role in the correct incorporation of gH-gL into virion membrane. Directs the glycoprotein N (gN) to the host trans-Golgi network. This Suid herpesvirus 1 (SuHV-1) protein is Envelope glycoprotein M.